We begin with the raw amino-acid sequence, 392 residues long: Zinc finger protein CONSTANS-LIKE 7 (392 aa).

Zn(2+)-binding residues include Cys-22, Cys-25, Cys-46, and His-51. The B box-type; atypical zinc-finger motif lies at 22–65 (CDACMKRSRASWYCPADDAFLCQSCDASIHSANHLAKRHERVRL). A coiled-coil region spans residues 226 to 254 (KEENKVGFEINCKDLKRVKDEDEEEEEAK). 2 disordered regions span residues 246–271 (EDEE…SNDK) and 326–346 (SDGS…GERE). Residues 259-271 (GSKDSDREASNDK) are compositionally biased toward basic and acidic residues. One can recognise a CCT domain in the interval 345–387 (REARVLRYKEKRRTRLFSKKIRYEVRKLNAEQRPRIKGRFVKR).

The protein belongs to the CONSTANS family.

Its subcellular location is the nucleus. This is Zinc finger protein CONSTANS-LIKE 7 (COL7) from Arabidopsis thaliana (Mouse-ear cress).